Consider the following 563-residue polypeptide: Beta-catenin-like protein 1 (563 aa).

Met1 carries the post-translational modification N-acetylmethionine. Positions 1-81 (MDVGELLSYQ…EEEEPLDESS (81 aa)) are disordered. Positions 16 to 33 (KRPRDDEEEELKTRRKQT) match the Nuclear localization signal motif. Basic and acidic residues predominate over residues 34 to 45 (GPRERGRYREEE). Positions 66 to 78 (DGEEEEEEEEPLD) are enriched in acidic residues. HEAT repeat units lie at residues 79–129 (ESSV…VVAT) and 134–176 (YHLL…TLHE). N6-acetyllysine is present on Lys91. The Nuclear export signal (NES) signature appears at 130 to 140 (MPDLYHLLVEL). ARM repeat units lie at residues 178 to 228 (EEGA…MAEF), 229 to 273 (RPEM…LQDN), 274 to 323 (DENR…CLML), 325 to 363 (SNRE…AMIG), and 364 to 417 (PEGT…LLRN). The residue at position 389 (Ser389) is a Phosphoserine. Positions 476–540 (DMEDEFYLRR…HIIKEYAENI (65 aa)) form a coiled coil. At Ser545 the chain carries Phosphoserine.

In terms of assembly, component of the PRP19-CDC5L splicing complex composed of a core complex comprising a homotetramer of PRPF19, CDC5L, PLRG1 and BCAS2, and at least three less stably associated proteins CTNNBL1, CWC15 and HSPA8. Interacts directly with CWC15 and CDC5L in the complex. Interacts with AICDA; the interaction is important for the antibody diversification activity of AICDA. Interacts with PRPF31 (via its NLS). Interacts (via its N-terminal NLS) with KPNA1 and KPNA2.

Its subcellular location is the nucleus. Its function is as follows. Component of the PRP19-CDC5L complex that forms an integral part of the spliceosome and is required for activating pre-mRNA splicing. Participates in AID/AICDA-mediated somatic hypermutation (SHM) and class-switch recombination (CSR), 2 processes resulting in the production of high-affinity, mutated isotype-switched antibodies. The protein is Beta-catenin-like protein 1 (Ctnnbl1) of Mus musculus (Mouse).